The following is a 749-amino-acid chain: Protein lin-54 homolog (749 aa).

Lys139 participates in a covalent cross-link: Glycyl lysine isopeptide (Lys-Gly) (interchain with G-Cter in SUMO2). Residues Lys244 and Lys249 each carry the N6-acetyllysine modification. Residues Ser264, Ser282, Ser310, and Ser314 each carry the phosphoserine modification. Residue Lys357 forms a Glycyl lysine isopeptide (Lys-Gly) (interchain with G-Cter in SUMO2) linkage. Positions 521-634 constitute a CRC domain; sequence PRKPCNCTKS…KCIGCKNFEE (114 aa). Residues 523–536 are DNA-binding; sequence KPCNCTKSLCLKLY. Residues Cys525, Cys527, Cys532, Cys537, Cys539, Cys546, Cys549, Cys551, and Cys554 each coordinate Zn(2+). The linker stretch occupies residues 583–596; that stretch reads IGKGKEGESDRRHS. The Zn(2+) site is built by Cys599, Cys601, Cys606, Cys611, Cys613, Cys620, Cys624, Cys626, and Cys629. Residues 599 to 612 form a DNA-binding region; it reads CNCKRSGCLKNYCE. A Phosphoserine modification is found at Ser635. Residues Lys639, Lys659, and Lys661 each participate in a glycyl lysine isopeptide (Lys-Gly) (interchain with G-Cter in SUMO2) cross-link.

It belongs to the lin-54 family. As to quaternary structure, component of the DREAM complex (also named LINC complex) at least composed of E2F4, E2F5, LIN9, LIN37, LIN52, LIN54, MYBL1, MYBL2, RBL1, RBL2, RBBP4, RBL2, TFDP1 and TFDP2. The complex exists in quiescent cells where it represses cell cycle-dependent genes. It dissociates in S phase when LIN9, LIN37, LIN52 and LIN54 form a subcomplex that binds to MYBL2.

It is found in the nucleus. Component of the DREAM complex, a multiprotein complex that can both act as a transcription activator or repressor depending on the context. In G0 phase, the complex binds to more than 800 promoters and is required for repression of E2F target genes. In S phase, the complex selectively binds to the promoters of G2/M genes whose products are required for mitosis and participates in their cell cycle dependent activation. In the complex, acts as a DNA-binding protein that binds the promoter of CDK1 in a sequence-specific manner. Specifically recognizes the consensus motif 5'-TTYRAA-3' in target DNA. In Rattus norvegicus (Rat), this protein is Protein lin-54 homolog (Lin54).